The primary structure comprises 263 residues: uncharacterized protein (263 aa).

A signal peptide spans 1–22 (MEYLKRLALFISVIILTIFIMG). Residue Cys-23 is the site of N-palmitoyl cysteine attachment. A lipid anchor (S-diacylglycerol cysteine) is attached at Cys-23.

Belongs to the staphylococcal tandem lipoprotein family.

Its subcellular location is the cell membrane. This is an uncharacterized protein from Staphylococcus aureus (strain MSSA476).